The sequence spans 751 residues: Proton-associated sugar transporter A (751 aa).

6 consecutive transmembrane segments (helical) span residues 93-113 (ILFG…PVLL), 123-143 (SLVW…LGAW), 155-175 (RPFI…LLNG), 191-211 (WGIL…DSAD), 233-253 (IHAL…GIHW), and 268-288 (VIYV…LISI). Thr500 is subject to Phosphothreonine. Transmembrane regions (helical) follow at residues 536–556 (GWLS…EVVF), 576–596 (VTMG…YSAI), 606–626 (VRTL…LATL), 630–650 (LYVV…LCTL), 688–708 (FLAQ…VGSA), and 710–730 (GVMY…SLCV).

The protein belongs to the glycoside-pentoside-hexuronide (GPH) cation symporter transporter (TC 2.A.2) family.

Its subcellular location is the membrane. It carries out the reaction D-galactose(in) + H(+)(in) = D-galactose(out) + H(+)(out). The enzyme catalyses D-glucose(out) + H(+)(out) = D-glucose(in) + H(+)(in). Functionally, proton-associated glucose transporter in the brain. This chain is Proton-associated sugar transporter A, found in Mus musculus (Mouse).